A 156-amino-acid polypeptide reads, in one-letter code: Small ribosomal subunit protein uS7 (156 aa).

The protein belongs to the universal ribosomal protein uS7 family. Part of the 30S ribosomal subunit. Contacts proteins S9 and S11.

Its function is as follows. One of the primary rRNA binding proteins, it binds directly to 16S rRNA where it nucleates assembly of the head domain of the 30S subunit. Is located at the subunit interface close to the decoding center, probably blocks exit of the E-site tRNA. This is Small ribosomal subunit protein uS7 from Yersinia enterocolitica serotype O:8 / biotype 1B (strain NCTC 13174 / 8081).